Reading from the N-terminus, the 45-residue chain is Photosystem II reaction center protein K (45 aa).

A propeptide spanning residues 1 to 8 is cleaved from the precursor; the sequence is MFSINFLG. Residues 17 to 37 form a helical membrane-spanning segment; the sequence is FDPIVDVLPIIPLLFLLLAFV.

The protein belongs to the PsbK family. As to quaternary structure, PSII is composed of 1 copy each of membrane proteins PsbA, PsbB, PsbC, PsbD, PsbE, PsbF, PsbH, PsbI, PsbJ, PsbK, PsbL, PsbM, PsbT, PsbY, PsbZ, Psb30/Ycf12, at least 3 peripheral proteins of the oxygen-evolving complex and a large number of cofactors. It forms dimeric complexes.

The protein localises to the plastid. The protein resides in the chloroplast thylakoid membrane. In terms of biological role, one of the components of the core complex of photosystem II (PSII). PSII is a light-driven water:plastoquinone oxidoreductase that uses light energy to abstract electrons from H(2)O, generating O(2) and a proton gradient subsequently used for ATP formation. It consists of a core antenna complex that captures photons, and an electron transfer chain that converts photonic excitation into a charge separation. This is Photosystem II reaction center protein K from Euglena viridis (Cercaria viridis).